Consider the following 284-residue polypeptide: T-cell leukemia homeobox protein 2 (284 aa).

Disordered stretches follow at residues Met-1–Phe-50, Gly-78–Gly-106, and Phe-139–Arg-166. Positions Thr-30–Phe-50 are enriched in gly residues. Pro residues predominate over residues Arg-87 to Gly-96. A DNA-binding region (homeobox) is located at residues Arg-157–Thr-216.

It localises to the nucleus. Transcription activator that binds DNA elements with the consensus sequence 5'-CGGTAATTGG-3'. Binds DNA via its homeobox. Required for normal cell death of enteric neurons in the gastrointestinal tract. Required for normal development of the enteric nervous system, and for proper development of normal motility of the gastrointestinal tract. The chain is T-cell leukemia homeobox protein 2 (TLX2) from Homo sapiens (Human).